The chain runs to 229 residues: 2-C-methyl-D-erythritol 4-phosphate cytidylyltransferase (229 aa).

Belongs to the IspD/TarI cytidylyltransferase family. IspD subfamily.

It catalyses the reaction 2-C-methyl-D-erythritol 4-phosphate + CTP + H(+) = 4-CDP-2-C-methyl-D-erythritol + diphosphate. It participates in isoprenoid biosynthesis; isopentenyl diphosphate biosynthesis via DXP pathway; isopentenyl diphosphate from 1-deoxy-D-xylulose 5-phosphate: step 2/6. Its function is as follows. Catalyzes the formation of 4-diphosphocytidyl-2-C-methyl-D-erythritol from CTP and 2-C-methyl-D-erythritol 4-phosphate (MEP). The protein is 2-C-methyl-D-erythritol 4-phosphate cytidylyltransferase of Neisseria gonorrhoeae (strain ATCC 700825 / FA 1090).